We begin with the raw amino-acid sequence, 109 residues long: Putative glutaredoxin-C11 (109 aa).

Residues 2–108 (AEMVARLASE…PLLKSAGALW (107 aa)) form the Glutaredoxin domain. A disulfide bridge links Cys22 with Cys25. Residues 106–109 (ALWL) carry the Responsive for interaction with TGA factors motif.

Belongs to the glutaredoxin family. CC-type subfamily.

It is found in the cytoplasm. Its subcellular location is the nucleus. Its function is as follows. Has a glutathione-disulfide oxidoreductase activity in the presence of NADPH and glutathione reductase. Reduces low molecular weight disulfides and proteins. This is Putative glutaredoxin-C11 (GRXC11) from Oryza sativa subsp. japonica (Rice).